The following is a 148-amino-acid chain: Meiosis inducing protein mei3 (148 aa).

Over residues 1–20 the composition is skewed to polar residues; it reads MSSQNTSNSRHPASSASALP. The interval 1 to 96 is disordered; it reads MSSQNTSNSR…AQRIEHENKE (96 aa). Low complexity predominate over residues 21–46; it reads NRTNTARRSTSPRTSTGSSSTNTNTK. Residues 75 to 86 are compositionally biased toward basic residues; the sequence is PMKRTKRVRRTP.

Its function is as follows. Acts as a critical meiotic inducer by binding non-covalently to protein kinase ran1/pat1 inhibiting its enzymatic activity. Inhibits ran1/pat1 by acting as a pseudosubstrate for ran1/pat1 instead of its natural substrate ste11. Inactivation of the ran1/pat1 protein kinase is both necessary and sufficient to divert a vegetative cell from mitotic division to meiotic differentiation. The chain is Meiosis inducing protein mei3 from Schizosaccharomyces pombe (strain 972 / ATCC 24843) (Fission yeast).